Reading from the N-terminus, the 62-residue chain is Amolopin-p-MT1 (62 aa).

The N-terminal stretch at 1-22 (MFTLKKSLLLLFFLGTISLSLC) is a signal peptide. A propeptide spans 23-42 (EQERGADEEENGGEVTEEEV) (removed in mature form).

This sequence belongs to the frog skin active peptide (FSAP) family. Brevinin subfamily. In terms of tissue distribution, expressed by the skin glands.

The protein localises to the secreted. Functionally, antimicrobial peptide. Active against a variety of Gram-negative and Gram-positive bacterial strains. Not active against fungi. Shows weak hemolytic activity against human erythrocytes. This is Amolopin-p-MT1 from Amolops mantzorum (Sichuan torrent frog).